The primary structure comprises 631 residues: Chaperone protein HtpG (631 aa).

The a; substrate-binding stretch occupies residues 1 to 338 (MILKEQETLG…CNDLPLNISR (338 aa)). Residues 339 to 554 (EMLQHNRITQ…SNNMTTHMAK (216 aa)) form a b region. A c region spans residues 555–631 (LIVASGQNKP…KLLNHDTIVN (77 aa)).

The protein belongs to the heat shock protein 90 family. As to quaternary structure, homodimer.

The protein resides in the cytoplasm. Its function is as follows. Molecular chaperone. Has ATPase activity. The sequence is that of Chaperone protein HtpG from Baumannia cicadellinicola subsp. Homalodisca coagulata.